The following is a 196-amino-acid chain: ATP-dependent Clp protease proteolytic subunit (196 aa).

S96 functions as the Nucleophile in the catalytic mechanism. The active site involves H121.

It belongs to the peptidase S14 family. In terms of assembly, fourteen ClpP subunits assemble into 2 heptameric rings which stack back to back to give a disk-like structure with a central cavity, resembling the structure of eukaryotic proteasomes.

It is found in the cytoplasm. It catalyses the reaction Hydrolysis of proteins to small peptides in the presence of ATP and magnesium. alpha-casein is the usual test substrate. In the absence of ATP, only oligopeptides shorter than five residues are hydrolyzed (such as succinyl-Leu-Tyr-|-NHMec, and Leu-Tyr-Leu-|-Tyr-Trp, in which cleavage of the -Tyr-|-Leu- and -Tyr-|-Trp bonds also occurs).. Functionally, cleaves peptides in various proteins in a process that requires ATP hydrolysis. Has a chymotrypsin-like activity. Plays a major role in the degradation of misfolded proteins. This is ATP-dependent Clp protease proteolytic subunit from Streptococcus salivarius.